The chain runs to 486 residues: Cardiolipin synthase A (486 aa).

2 consecutive transmembrane segments (helical) span residues 3–23 (TFYTVISWLSVFGYWLLIAGV) and 38–58 (MAWLLIIYILPLVGIIAYLSF). PLD phosphodiesterase domains follow at residues 219-246 (MDLRQHRKIVLIDNYVAYTGSMNMVDPR) and 399-426 (EGGLLHSKSVLVDGQLSLVGTVNLDMRS). Active-site residues include histidine 224, lysine 226, aspartate 231, histidine 404, lysine 406, and aspartate 411.

The protein belongs to the phospholipase D family. Cardiolipin synthase subfamily. ClsA sub-subfamily.

It is found in the cell inner membrane. It catalyses the reaction 2 a 1,2-diacyl-sn-glycero-3-phospho-(1'-sn-glycerol) = a cardiolipin + glycerol. Its function is as follows. Catalyzes the reversible phosphatidyl group transfer from one phosphatidylglycerol molecule to another to form cardiolipin (CL) (diphosphatidylglycerol) and glycerol. The chain is Cardiolipin synthase A from Yersinia pseudotuberculosis serotype O:3 (strain YPIII).